We begin with the raw amino-acid sequence, 381 residues long: MPYYTRDDNDVDDFDEFDPTPYSGGYDITVIYGRPIPPSDETCYPLSSGVDDDFEYERPEFTQIHEPSAYGDEALNTEYSSYSRPKPRPAFRPDSGGGGHVQGERPNPGYGSESGYGRKPESEYGSGYGGQTEVEYGRRPEQSYGSGYGGRTETESEYGSGGGGRTEVEYGRRPESGLGSGYGGRSESEYERKPSYGRSEEQEEGYRKPSYGRSEEQEEGYRKPSYGRSEEQEEGYRKPSYGRSEEEQEEGYRKPSYGRSEEQEEGSYRKPSYGRSDDQVESYIKPSYGRSEEQEEGSYRKPSYGRSEEQEEGSYRKQPSYGRGNDDDDDEQRRNRSGSGDDEEGSYGRKKYGGNDSDEDEEKKKHRHKHHHQKRRDEDDE.

Disordered regions lie at residues 1–20 (MPYY…FDPT) and 36–381 (IPPS…EDDE). Residues 9 to 18 (NDVDDFDEFD) are compositionally biased toward acidic residues. Basic and acidic residues-rich tracts occupy residues 166–175 (TEVEYGRRPE) and 186–237 (SESE…EGYR). Phosphoserine occurs at positions 339, 346, and 357. Over residues 364 to 374 (KKHRHKHHHQK) the composition is skewed to basic residues.

This is an uncharacterized protein from Arabidopsis thaliana (Mouse-ear cress).